The following is an 845-amino-acid chain: Beta-mannosidase B (845 aa).

Residues 1-20 form a disordered region; sequence MSKLQQFPLSKGWSFRDSED. Residue N252 is glycosylated (N-linked (GlcNAc...) asparagine). Catalysis depends on E432, which acts as the Proton donor. Residues N717 and N723 are each glycosylated (N-linked (GlcNAc...) asparagine).

It belongs to the glycosyl hydrolase 2 family. Beta-mannosidase B subfamily.

It catalyses the reaction Hydrolysis of terminal, non-reducing beta-D-mannose residues in beta-D-mannosides.. It functions in the pathway glycan metabolism; N-glycan degradation. Exoglycosidase that cleaves the single beta-linked mannose residue from the non-reducing end of beta-mannosidic oligosaccharides of various complexity and length. Prefers mannobiose over mannotriose and has no activity against polymeric mannan. Is also severely restricted by galactosyl substitutions at the +1 subsite. The protein is Beta-mannosidase B (mndB) of Neosartorya fischeri (strain ATCC 1020 / DSM 3700 / CBS 544.65 / FGSC A1164 / JCM 1740 / NRRL 181 / WB 181) (Aspergillus fischerianus).